Reading from the N-terminus, the 187-residue chain is Large ribosomal subunit protein uL13 (187 aa).

It belongs to the universal ribosomal protein uL13 family. As to quaternary structure, part of the 50S ribosomal subunit.

Its function is as follows. This protein is one of the early assembly proteins of the 50S ribosomal subunit, although it is not seen to bind rRNA by itself. It is important during the early stages of 50S assembly. The chain is Large ribosomal subunit protein uL13 from Pyrobaculum aerophilum (strain ATCC 51768 / DSM 7523 / JCM 9630 / CIP 104966 / NBRC 100827 / IM2).